We begin with the raw amino-acid sequence, 105 residues long: MTVTQQPKIRIKLKAYNSSLLNTSCKKIVDTAERTNAIAVGPIPLPTKRRIYCVLRSPHVDKDSREHFEIRSHRRIIDIHQPSSQTIDALMKLNLPSGVDIEVKL.

This sequence belongs to the universal ribosomal protein uS10 family. As to quaternary structure, part of the 30S ribosomal subunit.

The protein localises to the plastid. It localises to the chloroplast. Its function is as follows. Involved in the binding of tRNA to the ribosomes. This chain is Small ribosomal subunit protein uS10c, found in Porphyra purpurea (Red seaweed).